The following is a 1091-amino-acid chain: ATP-dependent helicase/deoxyribonuclease subunit B (1091 aa).

It belongs to the helicase family. AddB/RexB type 2 subfamily. As to quaternary structure, heterodimer of AddA and RexB. Mg(2+) serves as cofactor.

In terms of biological role, the heterodimer acts as both an ATP-dependent DNA helicase and an ATP-dependent, dual-direction single-stranded exonuclease. Recognizes the chi site generating a DNA molecule suitable for the initiation of homologous recombination. This subunit has 5' -&gt; 3' nuclease activity but not helicase activity. In Streptococcus pneumoniae (strain CGSP14), this protein is ATP-dependent helicase/deoxyribonuclease subunit B.